The primary structure comprises 200 residues: MKSFLFCCLLGTFLAIGMCLECEVCMQPGKRCNGSMMTCKDNEDTCVMFQTEVIRAPLSFTFTSKMCSTSDTCHLDYVETNLPYELAVRSRRACCVGDECKTMPPVVLEHHDNRYNGLHCPGCIGFGSHECNEKLVSCRDTENQCLSLIGKNFDFVADDITIKGCATESLCSLLQKKIFSAIGEFDLDVKCTPVFPQSSQ.

The first 19 residues, 1-19, serve as a signal peptide directing secretion; sequence MKSFLFCCLLGTFLAIGMC. 8 disulfide bridges follow: Cys22/Cys46, Cys25/Cys32, Cys39/Cys67, Cys73/Cys94, Cys95/Cys100, Cys120/Cys145, Cys138/Cys165, and Cys171/Cys191. N-linked (GlcNAc...) asparagine glycosylation occurs at Asn33.

The protein belongs to the CNF-like-inhibitor family. In terms of assembly, heterodimer of subunit A and subunit B. As to expression, expressed by the liver.

It is found in the secreted. Functionally, inhibits the enzymatic activity of phospholipase A2 (PA2). The polypeptide is Phospholipase A2 inhibitor gamma subunit B (Gloydius brevicaudus siniticus (Chinese mamushi)).